The chain runs to 220 residues: Endonuclease NucS (220 aa).

The protein belongs to the NucS endonuclease family.

The protein resides in the cytoplasm. Its function is as follows. Cleaves both 3' and 5' ssDNA extremities of branched DNA structures. The polypeptide is Endonuclease NucS (Parafrankia sp. (strain EAN1pec)).